Reading from the N-terminus, the 1194-residue chain is Multidrug efflux ATP-binding/permease protein BCG_0231 (1194 aa).

Transmembrane regions (helical) follow at residues 20-40 (LLLGFGAALAGTVIAVLVPLV), 56-76 (LAPWAVVLVAAAGATYLLTYV), 130-150 (LLFDVPNVLRHVLTLLLGVAV), 153-173 (WLSVPLALLAVLLVPVIGLIA), 258-278 (FALGGWMAAQGSITVGTFVAF), and 279-299 (WACLTLLARPACDLAGMLTIA). The ABC transmembrane type-1 1 domain occupies 21–301 (LLGFGAALAG…LAGMLTIAQQ (281 aa)). Positions 334 to 568 (LEFQRVSFGY…CPRYRELLSP (235 aa)) constitute an ABC transporter 1 domain. ATP is bound at residue 367–374 (GAPGSGKS). A run of 6 helical transmembrane segments spans residues 628–648 (ALSLLLVAVQTCAGLLPPLLI), 660–680 (VLSALWWAALAGTATVVIRWV), 743–763 (LVVAVISVVTLVGILVALLAI), 765–785 (ARLVLLIFTTMPVLALATWQF), 847–867 (LLALYYPFVALLCSLATTLVL), and 878–898 (VISVGALVTYLLYIELLYTPI). In terms of domain architecture, ABC transmembrane type-1 2 spans 628 to 910 (ALSLLLVAVQ…LAQMFDDYQR (283 aa)). The 236-residue stretch at 942–1177 (VVFDAVHYSY…GGHYSRLWAA (236 aa)) folds into the ABC transporter 2 domain. 976-983 (GSTGSGKS) is an ATP binding site.

Belongs to the ABC transporter superfamily. Lipid exporter (TC 3.A.1.106) family.

It localises to the cell inner membrane. In terms of biological role, overexpression increases resistance to chloramphenicol, ampicillin, streptomycin, tetracyclin and vancomycin. This Mycobacterium bovis (strain BCG / Pasteur 1173P2) protein is Multidrug efflux ATP-binding/permease protein BCG_0231.